Here is a 359-residue protein sequence, read N- to C-terminus: 3-dehydroquinate synthase (359 aa).

NAD(+)-binding positions include 71-76 (DGEQFK), 105-109 (GVIGD), 129-130 (TT), K142, K151, and 169-172 (CLQT). E184, H247, and H264 together coordinate Zn(2+).

This sequence belongs to the sugar phosphate cyclases superfamily. Dehydroquinate synthase family. Requires Co(2+) as cofactor. Zn(2+) serves as cofactor. It depends on NAD(+) as a cofactor.

Its subcellular location is the cytoplasm. The enzyme catalyses 7-phospho-2-dehydro-3-deoxy-D-arabino-heptonate = 3-dehydroquinate + phosphate. It participates in metabolic intermediate biosynthesis; chorismate biosynthesis; chorismate from D-erythrose 4-phosphate and phosphoenolpyruvate: step 2/7. In terms of biological role, catalyzes the conversion of 3-deoxy-D-arabino-heptulosonate 7-phosphate (DAHP) to dehydroquinate (DHQ). The polypeptide is 3-dehydroquinate synthase (Shewanella sp. (strain MR-4)).